Consider the following 257-residue polypeptide: Cytosolic Fe-S cluster assembly factor NUBP2 homolog (257 aa).

14 to 21 (GKGGVGKS) is a binding site for ATP. C188 and C191 together coordinate [4Fe-4S] cluster.

The protein belongs to the Mrp/NBP35 ATP-binding proteins family. NUBP2/CFD1 subfamily. As to quaternary structure, heterotetramer of 2 NUBP1 and 2 NUBP2 chains. [4Fe-4S] cluster serves as cofactor.

It localises to the cytoplasm. Functionally, component of the cytosolic iron-sulfur (Fe/S) protein assembly (CIA) machinery. Required for maturation of extramitochondrial Fe-S proteins. The NUBP1-NUBP2 heterotetramer forms a Fe-S scaffold complex, mediating the de novo assembly of an Fe-S cluster and its transfer to target apoproteins. This Culex quinquefasciatus (Southern house mosquito) protein is Cytosolic Fe-S cluster assembly factor NUBP2 homolog.